The primary structure comprises 378 residues: Queuine tRNA-ribosyltransferase (378 aa).

D92 serves as the catalytic Proton acceptor. Substrate is bound by residues 92-96, D146, Q188, and G215; that span reads DSGGF. Residues 246-252 are RNA binding; sequence GVGTHLE. The Nucleophile role is filled by D265. The segment at 270 to 274 is RNA binding; important for wobble base 34 recognition; it reads TRLAR. Residues C303, C305, C308, and H334 each contribute to the Zn(2+) site.

Belongs to the queuine tRNA-ribosyltransferase family. In terms of assembly, homodimer. Within each dimer, one monomer is responsible for RNA recognition and catalysis, while the other monomer binds to the replacement base PreQ1. The cofactor is Zn(2+).

It catalyses the reaction 7-aminomethyl-7-carbaguanine + guanosine(34) in tRNA = 7-aminomethyl-7-carbaguanosine(34) in tRNA + guanine. Its pathway is tRNA modification; tRNA-queuosine biosynthesis. Its function is as follows. Catalyzes the base-exchange of a guanine (G) residue with the queuine precursor 7-aminomethyl-7-deazaguanine (PreQ1) at position 34 (anticodon wobble position) in tRNAs with GU(N) anticodons (tRNA-Asp, -Asn, -His and -Tyr). Catalysis occurs through a double-displacement mechanism. The nucleophile active site attacks the C1' of nucleotide 34 to detach the guanine base from the RNA, forming a covalent enzyme-RNA intermediate. The proton acceptor active site deprotonates the incoming PreQ1, allowing a nucleophilic attack on the C1' of the ribose to form the product. After dissociation, two additional enzymatic reactions on the tRNA convert PreQ1 to queuine (Q), resulting in the hypermodified nucleoside queuosine (7-(((4,5-cis-dihydroxy-2-cyclopenten-1-yl)amino)methyl)-7-deazaguanosine). This chain is Queuine tRNA-ribosyltransferase, found in Thermosynechococcus vestitus (strain NIES-2133 / IAM M-273 / BP-1).